We begin with the raw amino-acid sequence, 485 residues long: Katanin p60 ATPase-containing subunit A1 (485 aa).

The tract at residues 101–173 (HRSSPCVVRK…KNKAEAVETE (73 aa)) is disordered. Over residues 141-173 (NGDKGKPQKSKEKKENPSKPKEDKNKAEAVETE) the composition is skewed to basic and acidic residues. 244 to 251 (GPPGTGKT) lines the ATP pocket.

The protein belongs to the AAA ATPase family. Katanin p60 subunit A1 subfamily. As to quaternary structure, can homooligomerize into hexameric rings, which may be promoted by interaction with microtubules. Interacts with katnb1, which may serve as a targeting subunit.

It is found in the cytoplasm. It localises to the cytoskeleton. Its subcellular location is the microtubule organizing center. The protein localises to the centrosome. The protein resides in the spindle pole. It is found in the spindle. The catalysed reaction is n ATP + n H2O + a microtubule = n ADP + n phosphate + (n+1) alpha/beta tubulin heterodimers.. Its activity is regulated as follows. ATPase activity is stimulated by microtubules, which promote homooligomerization. ATP-dependent microtubule severing is stimulated by interaction with katnb1. Its function is as follows. Catalytic subunit of a complex which severs microtubules in an ATP-dependent manner. Microtubule severing may promote rapid reorganization of cellular microtubule arrays and the release of microtubules from the centrosome following nucleation. The chain is Katanin p60 ATPase-containing subunit A1 (katna1) from Danio rerio (Zebrafish).